The chain runs to 435 residues: Astacin-like metalloendopeptidase (435 aa).

The N-terminal stretch at 1–23 is a signal peptide; the sequence is MGIMGSLWPWILTMLSLLGLSMG. The Peptidase M12A domain occupies 85–282; the sequence is RLLSVTNNKW…TRVCRLYNCS (198 aa). Cystine bridges form between cysteine 132–cysteine 281 and cysteine 153–cysteine 172. Histidine 182 is a Zn(2+) binding site. The active site involves glutamate 183. Histidine 186 and histidine 192 together coordinate Zn(2+). Positions 318–329 are enriched in low complexity; sequence SEESGSSAPSGS. Positions 318-356 are disordered; that stretch reads SEESGSSAPSGSRTGGQSIAGLGNSQQGWEHPPQSTFSV. Residues 340–355 are compositionally biased toward polar residues; sequence GNSQQGWEHPPQSTFS.

In terms of assembly, interacts (via N-terminal domain) with SPACA3; the interaction occurs during fertilization. Requires Zn(2+) as cofactor. As to expression, ovary-specific. Expressed in secondary, antral and Graafian follicle oocytes. Expressed in the egg cells. Not detected in two-cell embryos. Not detected in naked oocytes, oocytes in primordial or unilaminar primary follicles, or in any other ovarian cells at pre-pubertal, pubertal or adult stages (at protein level). Ovary-specific.

The protein resides in the cytoplasm. The protein localises to the cell membrane. It localises to the cytoplasmic vesicle. It is found in the secretory vesicle. Its subcellular location is the cortical granule. Its activity is regulated as follows. Inhibited by wide spectrum metalloproteinase inhibitor batimastat (BB-94). Also inhibited by EDTA. Functionally, oocyte-specific oolemmal receptor involved in sperm and egg adhesion and fertilization. Plays a role in the polyspermy inhibition. Probably acts as a protease for the post-fertilization cleavage of ZP2. Cleaves the sperm-binding ZP2 at the surface of the zona pellucida after fertilization and cortical granule exocytosis, rendering the zona pellucida unable to support further sperm binding. This Mus musculus (Mouse) protein is Astacin-like metalloendopeptidase.